Here is a 137-residue protein sequence, read N- to C-terminus: Oleosin Ara h 11.0102 (137 aa).

N-acetylalanine; alternate is present on Ala2. 2 helical membrane-spanning segments follow: residues 27-47 and 55-75; these read AVVA…ATVI and LFVI…LLGL.

The protein belongs to the oleosin family. In terms of tissue distribution, expressed in seeds (at protein level).

The protein localises to the lipid droplet. The protein resides in the membrane. Functionally, may have a structural role to stabilize the lipid body during desiccation of the seed by preventing coalescence of the oil. Probably interacts with both lipid and phospholipid moieties of lipid bodies. May also provide recognition signals for specific lipase anchorage in lipolysis during seedling growth. The protein is Oleosin Ara h 11.0102 of Arachis hypogaea (Peanut).